The primary structure comprises 643 residues: Phosphomethylpyrimidine synthase (643 aa).

Residues Asn248, Met277, Tyr306, His342, 362 to 364, 403 to 406, and Glu442 contribute to the substrate site; these read SRG and DGLR. Residue His446 coordinates Zn(2+). Residue Tyr469 coordinates substrate. His510 is a Zn(2+) binding site. The [4Fe-4S] cluster site is built by Cys590, Cys593, and Cys598.

The protein belongs to the ThiC family. As to quaternary structure, homodimer. [4Fe-4S] cluster serves as cofactor.

It catalyses the reaction 5-amino-1-(5-phospho-beta-D-ribosyl)imidazole + S-adenosyl-L-methionine = 4-amino-2-methyl-5-(phosphooxymethyl)pyrimidine + CO + 5'-deoxyadenosine + formate + L-methionine + 3 H(+). It functions in the pathway cofactor biosynthesis; thiamine diphosphate biosynthesis. In terms of biological role, catalyzes the synthesis of the hydroxymethylpyrimidine phosphate (HMP-P) moiety of thiamine from aminoimidazole ribotide (AIR) in a radical S-adenosyl-L-methionine (SAM)-dependent reaction. This is Phosphomethylpyrimidine synthase from Burkholderia cenocepacia (strain ATCC BAA-245 / DSM 16553 / LMG 16656 / NCTC 13227 / J2315 / CF5610) (Burkholderia cepacia (strain J2315)).